A 282-amino-acid chain; its full sequence is Aldo-keto reductase BQ2027_MB2996 (282 aa).

Tyr57 (proton donor) is an active-site residue. Residues Leu197, Val235, Arg237, Ser238, Ala239, Arg243, Ser246, Asn247, and Arg273 each contribute to the NADPH site.

The protein belongs to the aldo/keto reductase family.

The sequence is that of Aldo-keto reductase BQ2027_MB2996 from Mycobacterium bovis (strain ATCC BAA-935 / AF2122/97).